Here is a 314-residue protein sequence, read N- to C-terminus: Probable tRNA pseudouridine synthase B (314 aa).

Over residues 1-10 (MATRGRHRSR) the composition is skewed to basic residues. The interval 1-30 (MATRGRHRSRTSGTSSEPMTLRAPPDERDL) is disordered. Asp72 functions as the Nucleophile in the catalytic mechanism. Residues 237–314 (LPRVTIAPSA…LVVELDRMLV (78 aa)) enclose the PUA domain.

Belongs to the pseudouridine synthase TruB family. Type 2 subfamily.

It carries out the reaction uridine(55) in tRNA = pseudouridine(55) in tRNA. Could be responsible for synthesis of pseudouridine from uracil-55 in the psi GC loop of transfer RNAs. This Haloarcula marismortui (strain ATCC 43049 / DSM 3752 / JCM 8966 / VKM B-1809) (Halobacterium marismortui) protein is Probable tRNA pseudouridine synthase B.